A 390-amino-acid polypeptide reads, in one-letter code: Pyruvate dehydrogenase E1 component subunit alpha, somatic form, mitochondrial (390 aa).

The N-terminal 29 residues, 1 to 29 (MRKMLAAVSRVLSGASQKPASRVLVASRN), are a transit peptide targeting the mitochondrion. Residue Lys63 is modified to N6-acetyllysine; alternate. Lys63 is subject to N6-succinyllysine; alternate. Pyruvate contacts are provided by His92, Tyr118, Arg119, Ala157, Gly165, Val167, Asp196, Gly197, Ala198, Asn225, and Tyr227. The thiamine diphosphate site is built by Tyr118 and Arg119. The thiamine diphosphate site is built by Gly165, Val167, Asp196, Gly197, Ala198, and Asn225. Asp196 lines the Mg(2+) pocket. Positions 225 and 227 each coordinate Mg(2+). Ser232 bears the Phosphoserine; by PDK1 mark. An N6-acetyllysine; alternate modification is found at Lys244. At Lys244 the chain carries N6-succinyllysine; alternate. Lys277 bears the N6-succinyllysine mark. His292 contributes to the thiamine diphosphate binding site. Position 293 is a phosphoserine; by PDK1, PDK2, PDK3 and PDK4 (Ser293). At Ser295 the chain carries Phosphoserine. Ser300 carries the post-translational modification Phosphoserine; by PDK1, PDK2, PDK3 and PDK4. Tyr301 carries the post-translational modification Phosphotyrosine. N6-acetyllysine; alternate is present on Lys313. At Lys313 the chain carries N6-succinyllysine; alternate. N6-acetyllysine occurs at positions 321 and 336. Lys385 carries the N6-succinyllysine modification.

As to quaternary structure, heterotetramer of two PDHA1 and two PDHB subunits. The heterotetramer interacts with DLAT, and is part of the multimeric pyruvate dehydrogenase complex that contains multiple copies of pyruvate dehydrogenase (E1), dihydrolipoamide acetyltransferase (DLAT, E2) and lipoamide dehydrogenase (DLD, E3). These subunits are bound to an inner core composed of about 48 DLAT and 12 PDHX molecules. It depends on thiamine diphosphate as a cofactor. Mg(2+) serves as cofactor. In terms of processing, phosphorylation at Ser-232, Ser-293 and Ser-300 by PDK family kinases inactivates the enzyme; for this phosphorylation at a single site is sufficient. Phosphorylation at Ser-293 interferes with access to active site, and thereby inactivates the enzyme. Dephosphorylation at all three sites, i.e. at Ser-232, Ser-293 and Ser-300, is required for reactivation. Acetylation alters the phosphorylation pattern. Deacetylated by SIRT3.

The protein localises to the mitochondrion matrix. It carries out the reaction N(6)-[(R)-lipoyl]-L-lysyl-[protein] + pyruvate + H(+) = N(6)-[(R)-S(8)-acetyldihydrolipoyl]-L-lysyl-[protein] + CO2. Pyruvate dehydrogenase activity is inhibited by phosphorylation of PDHA1; it is reactivated by dephosphorylation. The pyruvate dehydrogenase complex catalyzes the overall conversion of pyruvate to acetyl-CoA and CO(2), and thereby links the glycolytic pathway to the tricarboxylic cycle. This chain is Pyruvate dehydrogenase E1 component subunit alpha, somatic form, mitochondrial (PDHA1), found in Pan troglodytes (Chimpanzee).